We begin with the raw amino-acid sequence, 228 residues long: Mediator of RNA polymerase II transcription subunit 7-A (228 aa).

It belongs to the Mediator complex subunit 7 family. As to quaternary structure, component of the Mediator complex.

It is found in the nucleus. Its function is as follows. Component of the Mediator complex, a coactivator involved in the regulated transcription of nearly all RNA polymerase II-dependent genes. Mediator functions as a bridge to convey information from gene-specific regulatory proteins to the basal RNA polymerase II transcription machinery. Mediator is recruited to promoters by direct interactions with regulatory proteins and serves as a scaffold for the assembly of a functional preinitiation complex with RNA polymerase II and the general transcription factors. This chain is Mediator of RNA polymerase II transcription subunit 7-A (med7-a), found in Xenopus laevis (African clawed frog).